The chain runs to 121 residues: Small ribosomal subunit protein uS11 (121 aa).

Belongs to the universal ribosomal protein uS11 family. Part of the 30S ribosomal subunit. Interacts with proteins S7 and S18. Binds to IF-3.

Its function is as follows. Located on the platform of the 30S subunit, it bridges several disparate RNA helices of the 16S rRNA. Forms part of the Shine-Dalgarno cleft in the 70S ribosome. In Ureaplasma parvum serovar 3 (strain ATCC 27815 / 27 / NCTC 11736), this protein is Small ribosomal subunit protein uS11.